Here is a 373-residue protein sequence, read N- to C-terminus: Glutamate 5-kinase (373 aa).

Residue lysine 15 participates in ATP binding. Residues serine 54, aspartate 141, and asparagine 153 each contribute to the substrate site. ATP contacts are provided by residues 173 to 174 and 215 to 221; these read SD and TGGMATK. Positions 280 to 358 constitute a PUA domain; that stretch reads RGKLLVDEGA…SEIEVVLGYK (79 aa).

Belongs to the glutamate 5-kinase family.

The protein resides in the cytoplasm. The enzyme catalyses L-glutamate + ATP = L-glutamyl 5-phosphate + ADP. It functions in the pathway amino-acid biosynthesis; L-proline biosynthesis; L-glutamate 5-semialdehyde from L-glutamate: step 1/2. Functionally, catalyzes the transfer of a phosphate group to glutamate to form L-glutamate 5-phosphate. This is Glutamate 5-kinase from Syntrophotalea carbinolica (strain DSM 2380 / NBRC 103641 / GraBd1) (Pelobacter carbinolicus).